The following is a 184-amino-acid chain: Dual-action ribosomal maturation protein DarP (184 aa).

The disordered stretch occupies residues 1-27 (MSIPDTEIPVDDDGYDENGYDRPSKSQ). Residues 8–18 (IPVDDDGYDEN) are compositionally biased toward acidic residues.

Belongs to the DarP family.

The protein localises to the cytoplasm. Functionally, member of a network of 50S ribosomal subunit biogenesis factors which assembles along the 30S-50S interface, preventing incorrect 23S rRNA structures from forming. Promotes peptidyl transferase center (PTC) maturation. In Bordetella avium (strain 197N), this protein is Dual-action ribosomal maturation protein DarP.